Here is a 303-residue protein sequence, read N- to C-terminus: mRNA-capping enzyme subunit beta (303 aa).

Belongs to the fungal TPase family. As to quaternary structure, heterodimer. The mRNA-capping enzyme is composed of two separate chains alpha and beta, respectively a mRNA guanylyltransferase and an mRNA 5'-triphosphate monophosphatase. The cofactor is Mg(2+).

It is found in the nucleus. The catalysed reaction is a 5'-end triphospho-ribonucleoside in mRNA + H2O = a 5'-end diphospho-ribonucleoside in mRNA + phosphate + H(+). Functionally, first step of mRNA capping. Converts the 5'-triphosphate end of a nascent mRNA chain into a diphosphate end. This chain is mRNA-capping enzyme subunit beta (pct1), found in Schizosaccharomyces pombe (strain 972 / ATCC 24843) (Fission yeast).